The primary structure comprises 92 residues: DNA/RNA-binding protein Alba (92 aa).

Lys-11 is subject to N6-acetyllysine.

Belongs to the histone-like Alba family. In terms of processing, acetylated. Acetylation at Lys-11 decreases DNA-binding affinity.

The protein resides in the cytoplasm. It is found in the chromosome. Functionally, binds double-stranded DNA tightly but without sequence specificity. Involved in DNA compaction. This is DNA/RNA-binding protein Alba from Pyrobaculum calidifontis (strain DSM 21063 / JCM 11548 / VA1).